A 158-amino-acid chain; its full sequence is Glycine-rich RNA-binding protein 2, mitochondrial (158 aa).

Residues 1–34 (MAFCNKLGGLLRQNISSNGNVPVTSMLGSLRLMS) constitute a mitochondrion transit peptide. The region spanning 35 to 113 (TKLFIGGLSW…RHIRVNPAND (79 aa)) is the RRM domain. A Phosphoserine modification is found at S43. Positions 122 to 157 (GGGGGYSGGGGGYGGGGGGYGGGGGGYGGGGDGGGG) are glycine-rich (GR) required for cell-to-cell movement.

It belongs to the GR-RBP family. In terms of assembly, binds to small phloem-mobile single-stranded RNAs (ss-sRNA, e.g. small interfering RNA (siRNA) and microRNA (miRNA)) in the phloeme exudate, including viral-derived sRNA (vsiRNA). Interacts with ORRM2, RBG3/ORRM3 and RBG5/ORRM4.

Its subcellular location is the mitochondrion. It localises to the secreted. In terms of biological role, promotes the cis-splicing and editing of several mitochondrial RNAs (including NAD5 transcripts). Plays a role in RNA transcription or processing during stress. Binds RNAs and DNAs sequence with a preference to single-stranded nucleic acids. Displays strong affinity to poly(U) sequence. Exerts cold and freezing tolerance, probably by exhibiting an RNA chaperone activity during the cold and freezing adaptation process. Mediates cell-to-cell trafficking of RNA interference (RNAi) signals (small RNAs (sRNA), e.g. small interfering RNA (siRNA) and microRNA (miRNA)) which regulate growth and development, as well as responses to environmental inputs, including pathogen attack; can compromise zucchini yellow mosaic virus (ZYMV) and tobacco rattle virus (TRV) infections at the early stage. In Arabidopsis thaliana (Mouse-ear cress), this protein is Glycine-rich RNA-binding protein 2, mitochondrial.